Here is a 199-residue protein sequence, read N- to C-terminus: Recombination protein RecR (199 aa).

The segment at 57-72 (CNLCNNFSEQEICPLC) adopts a C4-type zinc-finger fold. In terms of domain architecture, Toprim spans 80–175 (TLLCIVEMPS…QVSRIARGLP (96 aa)).

This sequence belongs to the RecR family.

May play a role in DNA repair. It seems to be involved in an RecBC-independent recombinational process of DNA repair. It may act with RecF and RecO. The polypeptide is Recombination protein RecR (Methylobacillus flagellatus (strain ATCC 51484 / DSM 6875 / VKM B-1610 / KT)).